We begin with the raw amino-acid sequence, 307 residues long: 4-diphosphocytidyl-2-C-methyl-D-erythritol kinase (307 aa).

Residue Lys16 is part of the active site. 101-111 (PVAGGMAGGSA) lines the ATP pocket. Residue Asp143 is part of the active site.

This sequence belongs to the GHMP kinase family. IspE subfamily.

It carries out the reaction 4-CDP-2-C-methyl-D-erythritol + ATP = 4-CDP-2-C-methyl-D-erythritol 2-phosphate + ADP + H(+). It functions in the pathway isoprenoid biosynthesis; isopentenyl diphosphate biosynthesis via DXP pathway; isopentenyl diphosphate from 1-deoxy-D-xylulose 5-phosphate: step 3/6. Catalyzes the phosphorylation of the position 2 hydroxy group of 4-diphosphocytidyl-2C-methyl-D-erythritol. In Nocardia farcinica (strain IFM 10152), this protein is 4-diphosphocytidyl-2-C-methyl-D-erythritol kinase.